The chain runs to 79 residues: uncharacterized protein (79 aa).

A signal peptide spans 1-33 (MRLIIRAIVLLALVWIGLLMSGYGILVGSKVNA).

This is an uncharacterized protein from Salmonella typhi.